A 391-amino-acid polypeptide reads, in one-letter code: MADIDNKEQSELDQDLDDVEEVEEEETGEETKIKARQLTVQMMQNPQILAALQERLDGLVETPTGYIESLPRVVKRRVNALKNLQVKCAQIEAKFYEEVHDLERKYAVLYQPLFDKRFEIINAIYEPTEEECEWKPDEEDEISEELKEKAKIEDEKKDEEKEDPKGIPEFWLTVFKNVDLLSDMVQEHDEPILKHLKDIKVKFSGAGQPMSFVLEFHFEPNEYFTNEVLTKTYRMRSEPDDSDPFSFDGPEIMGCTGCQIDWKKGKNVTLKTIKKKQKHKGRGTVRTVTKTVSNDSFFNFFAPPEVPESGDLDDDAEAILAADFEIGHFLRERIIPRSVLYFTGEAIEDDDDDYDEEGEEADEEGEEEGDEENDPDYDPKKDQNPAECKQQ.

The span at 1-10 (MADIDNKEQS) shows a compositional bias: basic and acidic residues. The interval 1–32 (MADIDNKEQSELDQDLDDVEEVEEEETGEETK) is disordered. An N-acetylalanine modification is found at Ala2. Ser10 carries the phosphoserine modification. Over residues 11-28 (ELDQDLDDVEEVEEEETG) the composition is skewed to acidic residues. Phosphothreonine occurs at positions 62 and 64. Ser69 is modified (phosphoserine). At Lys116 the chain carries N6-acetyllysine. The NAP1L motif motif lies at 125-150 (YEPTEEECEWKPDEEDEISEELKEKA). Over residues 132-143 (CEWKPDEEDEIS) the composition is skewed to acidic residues. A disordered region spans residues 132–163 (CEWKPDEEDEISEELKEKAKIEDEKKDEEKED). Ser143 bears the Phosphoserine mark. The span at 144–163 (EELKEKAKIEDEKKDEEKED) shows a compositional bias: basic and acidic residues. A Nuclear localization signal motif is present at residues 273-279 (IKKKQKH). The span at 346–376 (AIEDDDDDYDEEGEEADEEGEEEGDEENDPD) shows a compositional bias: acidic residues. The disordered stretch occupies residues 346–391 (AIEDDDDDYDEEGEEADEEGEEEGDEENDPDYDPKKDQNPAECKQQ). 5-glutamyl polyglycine occurs at positions 359 and 360. The span at 377–391 (YDPKKDQNPAECKQQ) shows a compositional bias: basic and acidic residues. Cys388 is subject to Cysteine methyl ester. The S-farnesyl cysteine moiety is linked to residue Cys388. The propeptide at 389-391 (KQQ) is removed in mature form.

The protein belongs to the nucleosome assembly protein (NAP) family. As to quaternary structure, homodimer. The dimer binds strongly and sequentially to single and double H2A-H2B heterodimers. Interacts with ERCC6; this interaction increases ERCC6 processivity. Interacts with RAD54. Interacts with SETD1A. In terms of processing, polyglycylated by TTLL10 on glutamate residues, resulting in polyglycine chains on the gamma-carboxyl group. Both polyglutamylation and polyglycylation modifications can coexist on the same protein on adjacent residues, and lowering polyglycylation levels increases polyglutamylation, and reciprocally. Post-translationally, polyglutamylated by TTLL4 on glutamate residues, resulting in polyglutamate chains on the gamma-carboxyl group. Both polyglutamylation and polyglycylation modifications can coexist on the same protein on adjacent residues, and lowering polyglycylation levels increases polyglutamylation, and reciprocally.

Its subcellular location is the nucleus. The protein resides in the melanosome. It localises to the cytoplasm. In terms of biological role, histone chaperone that plays a role in the nuclear import of H2A-H2B and nucleosome assembly. Also participates in several important DNA repair mechanisms: greatly enhances ERCC6-mediated chromatin remodeling which is essential for transcription-coupled nucleotide excision DNA repair. Also stimulates homologous recombination (HR) by RAD51 and RAD54 which is essential in mitotic DNA double strand break (DSB) repair. Plays a key role in the regulation of embryonic neurogenesis. Promotes the proliferation of neural progenitors and inhibits neuronal differentiation during cortical development. Regulates neurogenesis via the modulation of RASSF10; regulates RASSF10 expression by promoting SETD1A-mediated H3K4 methylation at the RASSF10 promoter. This Pongo abelii (Sumatran orangutan) protein is Nucleosome assembly protein 1-like 1 (NAP1L1).